We begin with the raw amino-acid sequence, 502 residues long: Probable cytochrome P450 28d1 (502 aa).

Cysteine 446 serves as a coordination point for heme.

The protein belongs to the cytochrome P450 family. Heme serves as cofactor.

It is found in the endoplasmic reticulum membrane. It localises to the microsome membrane. Its function is as follows. May be involved in the metabolism of insect hormones and in the breakdown of synthetic insecticides. The polypeptide is Probable cytochrome P450 28d1 (Cyp28d1) (Drosophila melanogaster (Fruit fly)).